We begin with the raw amino-acid sequence, 452 residues long: Cobyrinate a,c-diamide synthase (452 aa).

Residues 244–429 enclose the GATase cobBQ-type domain; the sequence is RIAVARDRAF…LHLHWGTQAW (186 aa). Cys325 (nucleophile) is an active-site residue.

This sequence belongs to the CobB/CbiA family. The cofactor is Mg(2+).

The catalysed reaction is cob(II)yrinate + 2 L-glutamine + 2 ATP + 2 H2O = cob(II)yrinate a,c diamide + 2 L-glutamate + 2 ADP + 2 phosphate + 2 H(+). It participates in cofactor biosynthesis; adenosylcobalamin biosynthesis; cob(II)yrinate a,c-diamide from sirohydrochlorin (anaerobic route): step 10/10. In terms of biological role, catalyzes the ATP-dependent amidation of the two carboxylate groups at positions a and c of cobyrinate, using either L-glutamine or ammonia as the nitrogen source. The polypeptide is Cobyrinate a,c-diamide synthase (Gloeobacter violaceus (strain ATCC 29082 / PCC 7421)).